A 183-amino-acid polypeptide reads, in one-letter code: NEDD8-conjugating enzyme Ubc12 (183 aa).

Position 1 is an N-acetylmethionine (M1). The tract at residues 1–29 (MIKLFSLKQQKKEEESAGGTKGSSKKASA) is disordered. Positions 1 to 57 (MIKLFSLKQQKKEEESAGGTKGSSKKASAAQLRIQKDINELNLPKTCDISFSDPDDL) are interaction with UBA3. N6-acetyllysine is present on K3. The region spanning 29–173 (AAQLRIQKDI…VQRSMRGGYI (145 aa)) is the UBC core domain. S50 carries the post-translational modification Phosphoserine. C111 (glycyl thioester intermediate) is an active-site residue. Residue R169 is modified to Asymmetric dimethylarginine; alternate. R169 carries the post-translational modification Omega-N-methylarginine; alternate.

This sequence belongs to the ubiquitin-conjugating enzyme family. UBC12 subfamily. Interacts with UBA3 and RBX1. Interacts (N-terminally acetylated form) with (via DCUN1 domain) DCUN1D1, DCUN1D2, DCUN1D3, DCUN1D4 and DCUN1D5. Post-translationally, the acetylation of Met-1 increases affinity for DCUN1D1 by about 2 orders of magnitude and is crucial for NEDD8 transfer to cullins.

The enzyme catalyses [E1 NEDD8-activating enzyme]-S-[NEDD8 protein]-yl-L-cysteine + [E2 NEDD8-conjugating enzyme]-L-cysteine = [E1 NEDD8-activating enzyme]-L-cysteine + [E2 NEDD8-conjugating enzyme]-S-[NEDD8-protein]-yl-L-cysteine.. The protein operates within protein modification; protein neddylation. Functionally, accepts the ubiquitin-like protein NEDD8 from the UBA3-NAE1 E1 complex and catalyzes its covalent attachment to other proteins. The specific interaction with the E3 ubiquitin ligase RBX1, but not RBX2, suggests that the RBX1-UBE2M complex neddylates specific target proteins, such as CUL1, CUL2, CUL3 and CUL4. Involved in cell proliferation. This chain is NEDD8-conjugating enzyme Ubc12 (Ube2m), found in Mus musculus (Mouse).